The sequence spans 342 residues: Type II restriction enzyme CviAII (342 aa).

It carries out the reaction Endonucleolytic cleavage of DNA to give specific double-stranded fragments with terminal 5'-phosphates.. In terms of biological role, a P subtype restriction enzyme that recognizes the double-stranded sequence 5'-CATG-3' and cleaves after C-1. This Chlorella (PBCV-1) protein is Type II restriction enzyme CviAII (CVIAIIR).